Reading from the N-terminus, the 399-residue chain is Phosphoglycerate kinase (399 aa).

Residues 22-24 (DFN), R38, 61-64 (HLGR), R120, and R153 contribute to the substrate site. Residues K204, E326, and 352-355 (GGDT) contribute to the ATP site.

The protein belongs to the phosphoglycerate kinase family. Monomer.

The protein resides in the cytoplasm. The catalysed reaction is (2R)-3-phosphoglycerate + ATP = (2R)-3-phospho-glyceroyl phosphate + ADP. The protein operates within carbohydrate degradation; glycolysis; pyruvate from D-glyceraldehyde 3-phosphate: step 2/5. This is Phosphoglycerate kinase from Geotalea uraniireducens (strain Rf4) (Geobacter uraniireducens).